A 118-amino-acid polypeptide reads, in one-letter code: Mating-type P-specific polypeptide Pc (118 aa).

Positions 29 to 97 (KTTIYKNGFM…VRKQIAKLER (69 aa)) form a DNA-binding region, HMG box.

It localises to the nucleus. Its function is as follows. Mating type proteins are sequence specific DNA-binding proteins that act as master switches in yeast differentiation by controlling gene expression in a cell type-specific fashion. Required for conjugation and efficient meiosis. In Schizosaccharomyces kambucha (Fission yeast), this protein is Mating-type P-specific polypeptide Pc (matPc).